The chain runs to 108 residues: Anti-sigma-B factor antagonist (108 aa).

Residues 3–108 enclose the STAS domain; it reads LNIETITHDD…MHVNEGTEVE (106 aa). Phosphoserine is present on S57.

This sequence belongs to the anti-sigma-factor antagonist family. In terms of processing, phosphorylated by RsbW on a serine residue.

Its function is as follows. Positive regulator of sigma-B activity. Non-phosphorylated RsbV binds to RsbW, preventing its association with sigma-B. When phosphorylated, releases RsbW, which is then free to complex with and inactivate sigma-B. This chain is Anti-sigma-B factor antagonist (rsbV), found in Staphylococcus epidermidis.